The chain runs to 570 residues: 4-hydroxy-7-methoxy-3-oxo-3,4-dihydro-2H-1,4-benzoxazin-2-yl glucoside beta-D-glucosidase 1c, chloroplastic (570 aa).

The N-terminal 50 residues, 1–50, are a transit peptide targeting the chloroplast; it reads MALLAAATLNPTTHLSIRSRAGHNSENLWLRSAASSQKSKGRFCNLTVRA. A beta-D-glucoside contacts are provided by residues glutamine 92, histidine 194, and 239-240; that span reads NE. Catalysis depends on glutamate 240, which acts as the Proton donor. Cysteine 259 and cysteine 265 are oxidised to a cystine. A beta-D-glucoside is bound by residues tyrosine 383, glutamate 456, tryptophan 504, 511-512, and phenylalanine 520; that span reads EW. Catalysis depends on glutamate 456, which acts as the Nucleophile.

The protein belongs to the glycosyl hydrolase 1 family. Homo- and heterohexamers. In terms of tissue distribution, expressed in young seedlings early after germination.

Its subcellular location is the plastid. It is found in the chloroplast. It catalyses the reaction Hydrolysis of terminal, non-reducing beta-D-glucosyl residues with release of beta-D-glucose.. The enzyme catalyses DIMBOA beta-D-glucoside + H2O = DIMBOA + D-glucose. It carries out the reaction DIBOA beta-D-glucoside + H2O = DIBOA + D-glucose. In terms of biological role, acts in defense of young plant parts against pests via the production of hydroxamic acids from hydroxamic acid glucosides. Enzymatic activity is highly correlated with plant growth. The preferred substrate is DIMBOA-beta-D-glucoside. The polypeptide is 4-hydroxy-7-methoxy-3-oxo-3,4-dihydro-2H-1,4-benzoxazin-2-yl glucoside beta-D-glucosidase 1c, chloroplastic (GLU1C) (Triticum aestivum (Wheat)).